The primary structure comprises 280 residues: Inner kinetochore subunit fta1 (280 aa).

The protein belongs to the CENP-L/IML3 family. In terms of assembly, component of the inner kinetochore constitutive centromere-associated network (CCAN) (also known as central kinetochore Sim4 complex in fission yeast), which is composed of at least cnl2, cnp3, cnp20, fta1, fta2, fta3, fta4, fta6, fta7, mal2, mhf1, mhf2, mis6, mis15, mis17, sim4 and wip1.

Its subcellular location is the nucleus. The protein localises to the chromosome. The protein resides in the centromere. It is found in the kinetochore. Functionally, component of the kinetochore, a multiprotein complex that assembles on centromeric DNA and attaches chromosomes to spindle microtubules, mediating chromosome segregation and sister chromatid segregation during meiosis and mitosis. Component of the inner kinetochore constitutive centromere-associated network (CCAN), which serves as a structural platform for outer kinetochore assembly. The chain is Inner kinetochore subunit fta1 (fta1) from Schizosaccharomyces pombe (strain 972 / ATCC 24843) (Fission yeast).